Reading from the N-terminus, the 158-residue chain is SUMO-conjugating enzyme UBC9 (158 aa).

Residues isoleucine 4–proline 157 enclose the UBC core domain. Residues arginine 13–lysine 18 form an interaction with sumo1 region. The active-site Glycyl thioester intermediate is cysteine 93.

This sequence belongs to the ubiquitin-conjugating enzyme family. In terms of assembly, forms a tight complex with RANGAP1 and RANBP2.

It localises to the nucleus. The protein operates within protein modification; protein sumoylation. In terms of biological role, accepts the ubiquitin-like proteins SUMO1, SUMO2 and SUMO3 from the UBLE1A-UBLE1B E1 complex and catalyzes their covalent attachment to other proteins with the help of an E3 ligase such as RANBP2 or CBX4. Essential for nuclear architecture and chromosome segregation. The chain is SUMO-conjugating enzyme UBC9 (ube2i) from Pagrus major (Red sea bream).